A 485-amino-acid polypeptide reads, in one-letter code: MKVALVSYEVYPFAKVGGLADVVGALPKYLKNFSVEPIVIMPKHKIVEKNAEKFSYSLRKIKESISVPYLKTDEKFDIYQTFIPGTQIPVYLIANDYYFSAEQVYEGPDLAEQAIYFSAAVFEALKVLGEKVDVLHINDWQTGLVPVYLKTLYKDDEFFSKTVVLLTIHNLGYQGIFDSSYMNFSGLPDYLYNIDGIEFYGKINFLKGGILFSDVINTVSPTYAQEIQTKEYGEKLDGVLRLRSSDLYGILNGIDYDEYNPETDKRIYVNYSLQEIEKKYENKKMLQKELNLPQTNDVPVIGMITRLVDQKGLDILSEVLRYILNMDVQFVLLGTGDKKYEEMFKDIEKEFPDKMSANITFDIVLAQKIYASSDMFLMPSRYEPCGLGQMYSLRYGTIPVVRYTGGLADTVMEYDEEAMKGNGFGFKEYDSAYLLKAVARAVDFFKNKKGHWKKLIENAMKTDLSWERSANEYVKIYNKALNKRR.

An ADP-alpha-D-glucose-binding site is contributed by Lys-15.

Belongs to the glycosyltransferase 1 family. Bacterial/plant glycogen synthase subfamily.

It catalyses the reaction [(1-&gt;4)-alpha-D-glucosyl](n) + ADP-alpha-D-glucose = [(1-&gt;4)-alpha-D-glucosyl](n+1) + ADP + H(+). It functions in the pathway glycan biosynthesis; glycogen biosynthesis. Synthesizes alpha-1,4-glucan chains using ADP-glucose. This is Glycogen synthase from Thermosipho africanus (strain TCF52B).